Consider the following 362-residue polypeptide: Major capsid protein VP1 (362 aa).

Positions 5–19 match the Bipartite nuclear localization signal motif; sequence KRKGECPGAAPKKPK. The residue at position 338 (Thr-338) is a Phosphothreonine; by host.

The protein belongs to the polyomaviruses coat protein VP1 family. In terms of assembly, homomultimer; disulfide-linked. The virus capsid is composed of 72 icosahedral units, each one composed of five disulfide-linked copies of VP1. Interacts with minor capsid proteins VP2 and VP3.

The protein localises to the virion. It is found in the host nucleus. Its function is as follows. Forms an icosahedral capsid with a T=7 symmetry and a 40 nm diameter. The capsid is composed of 72 pentamers linked to each other by disulfide bonds and associated with VP2 or VP3 proteins. Interacts with sialic acids on the cell surface to provide virion attachment to target cell. Once attached, the virion is internalized by endocytosis and traffics to the endoplasmic reticulum. Inside the endoplasmic reticulum, the protein folding machinery isomerizes VP1 interpentamer disulfide bonds, thereby triggering initial uncoating. Next, the virion uses the endoplasmic reticulum-associated degradation machinery to probably translocate in the cytosol before reaching the nucleus. Nuclear entry of the viral DNA involves the selective exposure and importin recognition of VP2/Vp3 nuclear localization signal. In late phase of infection, neo-synthesized VP1 encapsulates replicated genomic DNA in the nucleus, and participates in rearranging nucleosomes around the viral DNA. This chain is Major capsid protein VP1, found in Simian virus 12 (strain wt100) (SV-12).